A 919-amino-acid chain; its full sequence is Isoleucine--tRNA ligase (919 aa).

The short motif at 57-67 is the 'HIGH' region element; the sequence is PYANGDIHMGT. Residue Glu552 coordinates L-isoleucyl-5'-AMP. Residues 593 to 597 carry the 'KMSKS' region motif; the sequence is KMSKS. Lys596 lines the ATP pocket. Zn(2+)-binding residues include Cys886, Cys889, Cys906, and Cys909.

The protein belongs to the class-I aminoacyl-tRNA synthetase family. IleS type 1 subfamily. Monomer. It depends on Zn(2+) as a cofactor.

Its subcellular location is the cytoplasm. It catalyses the reaction tRNA(Ile) + L-isoleucine + ATP = L-isoleucyl-tRNA(Ile) + AMP + diphosphate. Functionally, catalyzes the attachment of isoleucine to tRNA(Ile). As IleRS can inadvertently accommodate and process structurally similar amino acids such as valine, to avoid such errors it has two additional distinct tRNA(Ile)-dependent editing activities. One activity is designated as 'pretransfer' editing and involves the hydrolysis of activated Val-AMP. The other activity is designated 'posttransfer' editing and involves deacylation of mischarged Val-tRNA(Ile). The chain is Isoleucine--tRNA ligase from Petrotoga mobilis (strain DSM 10674 / SJ95).